A 54-amino-acid polypeptide reads, in one-letter code: U-reduvitoxin-Pr7a (54 aa).

Residues 1-23 (MDFLRILLFVLACIMALFTSAIA) form the signal peptide. Cystine bridges form between C26-C41, C33-C46, and C40-C53.

Belongs to the venom Ptu1-like knottin family. In terms of tissue distribution, expressed by the venom gland.

It is found in the secreted. Functionally, binds reversibly and blocks P/Q-type voltage-gated calcium channels (Cav). The protein is U-reduvitoxin-Pr7a of Platymeris rhadamanthus (Red spot assassin bug).